We begin with the raw amino-acid sequence, 315 residues long: Cobalamin biosynthesis protein CobD (315 aa).

Helical transmembrane passes span 48-68 (IAGFFAWLFIVFITFGVTLGI), 77-97 (PILGTVVSGILIYFCISAKGL), 150-170 (DGIIAPLFFAGIGGAPLAFLY), 200-220 (VFNYIPARLTAYLIVISSFIL), and 295-315 (MVSFLGMVVALIIRCILEVII).

Belongs to the CobD/CbiB family.

The protein resides in the cell membrane. Its pathway is cofactor biosynthesis; adenosylcobalamin biosynthesis. Functionally, converts cobyric acid to cobinamide by the addition of aminopropanol on the F carboxylic group. This is Cobalamin biosynthesis protein CobD from Clostridium perfringens (strain 13 / Type A).